The following is a 695-amino-acid chain: Elongation factor G (695 aa).

The 276-residue stretch at 5–280 (SHYRNIGIFA…AVIDFLPSPT (276 aa)) folds into the tr-type G domain. Residues 14-21 (AHVDAGKT), 78-82 (DTPGH), and 132-135 (NKLD) contribute to the GTP site. The interval 279-299 (PTEVDPQPLTDEETGEPTGEV) is disordered.

It belongs to the TRAFAC class translation factor GTPase superfamily. Classic translation factor GTPase family. EF-G/EF-2 subfamily.

It is found in the cytoplasm. Catalyzes the GTP-dependent ribosomal translocation step during translation elongation. During this step, the ribosome changes from the pre-translocational (PRE) to the post-translocational (POST) state as the newly formed A-site-bound peptidyl-tRNA and P-site-bound deacylated tRNA move to the P and E sites, respectively. Catalyzes the coordinated movement of the two tRNA molecules, the mRNA and conformational changes in the ribosome. The polypeptide is Elongation factor G (Alteromonas mediterranea (strain DSM 17117 / CIP 110805 / LMG 28347 / Deep ecotype)).